Reading from the N-terminus, the 140-residue chain is Putative cell wall protein (140 aa).

An N-terminal signal peptide occupies residues 1–21 (MASSLITSAVIVVVLSLVLGS). Over residues 85 to 98 (TGGGIPSYNGGQGA) the composition is skewed to gly residues. Residues 85-140 (TGGGIPSYNGGQGAGPHTQLPGGDDTLVPNPGFEAPTPTIGAGTGSNGQVPPVPLP) form a disordered region.

In terms of tissue distribution, inflorescence.

The protein resides in the secreted. It localises to the cell wall. The polypeptide is Putative cell wall protein (Arabidopsis thaliana (Mouse-ear cress)).